Reading from the N-terminus, the 367-residue chain is Cyclin-D5-1 (367 aa).

Residues glutamine 307 to threonine 333 form a disordered region.

This sequence belongs to the cyclin family. Cyclin D subfamily.

The protein is Cyclin-D5-1 (CYCD5-1) of Oryza sativa subsp. japonica (Rice).